The primary structure comprises 392 residues: Acyl-CoA dehydrogenase IpdE1 (392 aa).

FAD contacts are provided by residues 126 to 129 (QGYS) and serine 171. Glutamate 254 serves as the catalytic Proton acceptor. 371 to 373 (SNE) serves as a coordination point for FAD.

It belongs to the acyl-CoA dehydrogenase family. In terms of assembly, heterotetramer composed of 2 IpdE1 subunits and 2 IpdE2 subunits. The cofactor is FAD.

The enzyme catalyses 3-[(3aS,4S,5R,7aS)-5-hydroxy-7a-methyl-1-oxo-octahydro-1H-inden-4-yl]propanoyl-CoA + A = (2E)-3-[(3aS,4S,5R,7aS)-5-hydroxy-7a-methyl-1-oxo-octahydro-1H-inden-4-yl]prop-2-enoyl-CoA + AH2. Its pathway is steroid metabolism; cholesterol degradation. Involved in cholesterol degradation. Catalyzes the dehydrogenation of 5OH-HIP-CoA to 5OH-HIPE-CoA. The protein is Acyl-CoA dehydrogenase IpdE1 of Mycolicibacterium smegmatis (strain ATCC 700084 / mc(2)155) (Mycobacterium smegmatis).